Consider the following 102-residue polypeptide: Large ribosomal subunit protein bL21 (102 aa).

Belongs to the bacterial ribosomal protein bL21 family. In terms of assembly, part of the 50S ribosomal subunit. Contacts protein L20.

In terms of biological role, this protein binds to 23S rRNA in the presence of protein L20. This is Large ribosomal subunit protein bL21 from Lactiplantibacillus plantarum (strain ATCC BAA-793 / NCIMB 8826 / WCFS1) (Lactobacillus plantarum).